The sequence spans 1104 residues: A disintegrin and metalloproteinase with thrombospondin motifs 10 (1104 aa).

An N-terminal signal peptide occupies residues 1 to 25 (MASACQILRWALALGLGLTFKVTHA). A propeptide spanning residues 26-233 (FRSQDELLSS…SERGQLGLKR (208 aa)) is cleaved from the precursor. N-linked (GlcNAc...) asparagine glycosylation is found at asparagine 90 and asparagine 222. Residues 239-457 (RYVETLVVAD…GLGLCLNNRP (219 aa)) enclose the Peptidase M12B domain. 11 disulfide bridges follow: cysteine 315-cysteine 376, cysteine 351-cysteine 358, cysteine 370-cysteine 452, cysteine 409-cysteine 436, cysteine 479-cysteine 501, cysteine 490-cysteine 508, cysteine 496-cysteine 531, cysteine 521-cysteine 536, cysteine 559-cysteine 596, cysteine 563-cysteine 601, and cysteine 574-cysteine 586. A Zn(2+)-binding site is contributed by histidine 392. Residue glutamate 393 is part of the active site. Residues histidine 396 and histidine 402 each contribute to the Zn(2+) site. Positions 460-546 (QDFVYPTVAP…VPFGSRPEGV (87 aa)) constitute a Disintegrin domain. In terms of domain architecture, TSP type-1 1 spans 547–602 (DGAWGPWTPWGDCSRSCGGGVSSSSRHCDSPRPTIGGKYCLGERRRHRSCNTNDCP). Residues 706–818 (ETIEGVFSPA…PALHYRFNAP (113 aa)) form a spacer region. Residues asparagine 740 and asparagine 795 are each glycosylated (N-linked (GlcNAc...) asparagine). 4 TSP type-1 domains span residues 825–885 (PPYS…EPCP), 888–943 (WVVG…QGPM), 944–1003 (CPPE…RRCP), and 1004–1058 (PARW…AKCD). Disulfide bonds link cysteine 837–cysteine 879, cysteine 841–cysteine 884, and cysteine 852–cysteine 866. An N-linked (GlcNAc...) asparagine glycan is attached at asparagine 892. A PLAC domain is found at 1066 to 1104 (GPEECKDVNKVAYCPLVLKFQFCSRAYFRQMCCKTCQGR).

As to quaternary structure, interacts with FBN1; this interaction promotes microfibrils assembly. The cofactor is Zn(2+). In terms of processing, glycosylated. Can be O-fucosylated by POFUT2 on a serine or a threonine residue found within the consensus sequence C1-X(2)-(S/T)-C2-G of the TSP type-1 repeat domains where C1 and C2 are the first and second cysteine residue of the repeat, respectively. Fucosylated repeats can then be further glycosylated by the addition of a beta-1,3-glucose residue by the glucosyltransferase, B3GALTL. Fucosylation mediates the efficient secretion of ADAMTS family members. Can also be C-glycosylated with one or two mannose molecules on tryptophan residues within the consensus sequence W-X-X-W of the TPRs, and N-glycosylated. These other glycosylations can also facilitate secretion. As to expression, widely expressed in adult tissues.

The protein resides in the secreted. Its subcellular location is the extracellular space. It localises to the extracellular matrix. In terms of biological role, metalloprotease that participate in microfibrils assembly. Microfibrils are extracellular matrix components occurring independently or along with elastin in the formation of elastic tissues. In Mus musculus (Mouse), this protein is A disintegrin and metalloproteinase with thrombospondin motifs 10 (Adamts10).